The sequence spans 1612 residues: uncharacterized protein (1612 aa).

The stretch at glutamate 23 to asparagine 52 forms a coiled coil. The span at isoleucine 46 to histidine 93 shows a compositional bias: basic and acidic residues. 2 disordered regions span residues isoleucine 46–valine 94 and glutamate 369–glutamine 400. A compositionally biased stretch (polar residues) spans aspartate 375–leucine 394. A helical transmembrane segment spans residues phenylalanine 479–asparagine 499. 4 disordered regions span residues threonine 698–leucine 777, asparagine 992–proline 1037, serine 1091–serine 1157, and asparagine 1257–lysine 1291. Over residues lysine 708 to leucine 777 the composition is skewed to basic and acidic residues. Low complexity-rich tracts occupy residues asparagine 996 to asparagine 1028, serine 1102 to asparagine 1140, and asparagine 1257 to asparagine 1271. Coiled coils occupy residues tyrosine 1338–lysine 1362, serine 1444–aspartate 1469, and asparagine 1553–threonine 1601. Over residues methionine 1554–glutamate 1566 the composition is skewed to basic and acidic residues. The tract at residues methionine 1554 to lysine 1612 is disordered. The segment covering glycine 1567–aspartate 1597 has biased composition (acidic residues).

The protein localises to the membrane. This is an uncharacterized protein from Plasmodium falciparum (isolate 3D7).